We begin with the raw amino-acid sequence, 304 residues long: MKCVDLFSGCGGLSLGFELAGFEICAAFENWEKAIEIYKNNFSHPIYNIDLRNEKEAVEKIKKYSPDLIMGGPPCQDFSSAGKRDISLGRADLTYSFANIVCNIRPKWFVMENVEQIKKSHILQDIINQFIDFGYGLTSAILDASYCGVPQSRTRFSLIGKLNSEHNFLIPTLSRKLSDKPMTVRDYLGNSLNLEFYYRHPRNYNRRGIFSIDEPSPTIRGVNRPIPKGYNINSCDPKGVELAKVRPLTTIERSYIQTFPKSFLFSGTKTDLEQMIGNAVPVNLAKFVASAIINFEKEPIRSMG.

The region spanning 1-299 (MKCVDLFSGC…SAIINFEKEP (299 aa)) is the SAM-dependent MTase C5-type domain. Residue Cys-75 is part of the active site.

The protein belongs to the class I-like SAM-binding methyltransferase superfamily. C5-methyltransferase family.

It carries out the reaction a 2'-deoxycytidine in DNA + S-adenosyl-L-methionine = a 5-methyl-2'-deoxycytidine in DNA + S-adenosyl-L-homocysteine + H(+). Its function is as follows. A methylase, recognizes the double-stranded sequence 5'-GRCGYC-3', methylates C-? on both strands, and protects the DNA from cleavage by the HindV endonuclease. The sequence is that of Type II methyltransferase M.HindV (hindVM) from Haemophilus influenzae (strain ATCC 51907 / DSM 11121 / KW20 / Rd).